Reading from the N-terminus, the 235-residue chain is (5-formylfuran-3-yl)methyl phosphate synthase (235 aa).

The active-site Schiff-base intermediate with substrate is the K27. The active-site Proton acceptor is the K86.

This sequence belongs to the MfnB family.

The enzyme catalyses 2 D-glyceraldehyde 3-phosphate = 4-(hydroxymethyl)-2-furancarboxaldehyde phosphate + phosphate + 2 H2O. It participates in cofactor biosynthesis; methanofuran biosynthesis. Functionally, catalyzes the formation of 4-(hydroxymethyl)-2-furancarboxaldehyde phosphate (4-HFC-P) from two molecules of glyceraldehyde-3-P (GA-3-P). The protein is (5-formylfuran-3-yl)methyl phosphate synthase of Archaeoglobus fulgidus (strain ATCC 49558 / DSM 4304 / JCM 9628 / NBRC 100126 / VC-16).